Reading from the N-terminus, the 280-residue chain is Protein phosphatase 1 regulatory subunit 3B-A (280 aa).

A PP1-binding motif motif is present at residues 58–61; that stretch reads RVSF. The 109-residue stretch at 121–229 folds into the CBM21 domain; sequence RNRLQADSVC…SNKSLNYKIA (109 aa).

As to quaternary structure, interacts with glycogen, PPP1CC catalytic subunit of PP1 and PYGL. Associates with glycogen particles. Forms complexes with debranching enzyme, glycogen phosphorylase, glycogen synthase and phosphorylase kinase which is necessary for its regulation of PP1 activity.

Functionally, acts as a glycogen-targeting subunit for phosphatase PP1. Facilitates interaction of the PP1 with enzymes of the glycogen metabolism and regulates its activity. Suppresses the rate at which PP1 dephosphorylates (inactivates) glycogen phosphorylase and enhances the rate at which it activates glycogen synthase and therefore limits glycogen breakdown. In Xenopus laevis (African clawed frog), this protein is Protein phosphatase 1 regulatory subunit 3B-A (ppp1r3b-a).